The chain runs to 153 residues: Probable inactive ribonuclease-like protein 13 (153 aa).

Residues 1 to 22 (MAPDVAWLLVLPLVFRPTLVTG) form the signal peptide.

It belongs to the pancreatic ribonuclease family.

The protein localises to the secreted. Does not exhibit any ribonuclease activity. The protein is Probable inactive ribonuclease-like protein 13 (Rnase13) of Mus musculus (Mouse).